We begin with the raw amino-acid sequence, 626 residues long: Chaperone protein DnaK (626 aa).

The residue at position 197 (T197) is a Phosphothreonine; by autocatalysis. Over residues 595-614 (QNMAQQQQAQGGAQQQNQNK) the composition is skewed to low complexity. Residues 595 to 626 (QNMAQQQQAQGGAQQQNQNKGGDDDVIDAEVE) form a disordered region.

The protein belongs to the heat shock protein 70 family.

Functionally, acts as a chaperone. This chain is Chaperone protein DnaK, found in Nautilia profundicola (strain ATCC BAA-1463 / DSM 18972 / AmH).